The following is a 239-amino-acid chain: Ribosomal RNA small subunit methyltransferase G (239 aa).

Residues Gly77, Phe82, Ala128–Glu129, and Arg147 contribute to the S-adenosyl-L-methionine site. Residues Lys219–Gly239 are disordered.

It belongs to the methyltransferase superfamily. RNA methyltransferase RsmG family.

Its subcellular location is the cytoplasm. Specifically methylates the N7 position of guanine in position 535 of 16S rRNA. This is Ribosomal RNA small subunit methyltransferase G from Bacillus subtilis (strain 168).